The chain runs to 635 residues: 4-hydroxy-3-methylbut-2-enyl diphosphate reductase (635 aa).

The segment at 1–279 (MSIILAKKSG…KEAIFKMSNK (279 aa)) is 4-hydroxy-3-methylbut-2-enyl diphosphate reductase. Cysteine 12 contacts [4Fe-4S] cluster. (2E)-4-hydroxy-3-methylbut-2-enyl diphosphate contacts are provided by histidine 42 and histidine 77. Dimethylallyl diphosphate-binding residues include histidine 42 and histidine 77. Isopentenyl diphosphate contacts are provided by histidine 42 and histidine 77. Cysteine 99 lines the [4Fe-4S] cluster pocket. Histidine 127 lines the (2E)-4-hydroxy-3-methylbut-2-enyl diphosphate pocket. Histidine 127 serves as a coordination point for dimethylallyl diphosphate. An isopentenyl diphosphate-binding site is contributed by histidine 127. The Proton donor role is filled by glutamate 129. (2E)-4-hydroxy-3-methylbut-2-enyl diphosphate is bound at residue threonine 163. Cysteine 191 is a [4Fe-4S] cluster binding site. Residues serine 219, serine 220, asparagine 221, and serine 263 each contribute to the (2E)-4-hydroxy-3-methylbut-2-enyl diphosphate site. Residues serine 219, serine 220, asparagine 221, and serine 263 each coordinate dimethylallyl diphosphate. Positions 219, 220, 221, and 263 each coordinate isopentenyl diphosphate. S1 motif domains are found at residues 298-373 (GQEV…LNRE), 380-455 (KEAF…ASRR), 476-544 (DTIK…LSIK), and 561-630 (GNIV…LSIK).

The protein in the N-terminal section; belongs to the IspH family. [4Fe-4S] cluster is required as a cofactor.

It catalyses the reaction isopentenyl diphosphate + 2 oxidized [2Fe-2S]-[ferredoxin] + H2O = (2E)-4-hydroxy-3-methylbut-2-enyl diphosphate + 2 reduced [2Fe-2S]-[ferredoxin] + 2 H(+). The enzyme catalyses dimethylallyl diphosphate + 2 oxidized [2Fe-2S]-[ferredoxin] + H2O = (2E)-4-hydroxy-3-methylbut-2-enyl diphosphate + 2 reduced [2Fe-2S]-[ferredoxin] + 2 H(+). Its pathway is isoprenoid biosynthesis; dimethylallyl diphosphate biosynthesis; dimethylallyl diphosphate from (2E)-4-hydroxy-3-methylbutenyl diphosphate: step 1/1. It functions in the pathway isoprenoid biosynthesis; isopentenyl diphosphate biosynthesis via DXP pathway; isopentenyl diphosphate from 1-deoxy-D-xylulose 5-phosphate: step 6/6. Catalyzes the conversion of 1-hydroxy-2-methyl-2-(E)-butenyl 4-diphosphate (HMBPP) into a mixture of isopentenyl diphosphate (IPP) and dimethylallyl diphosphate (DMAPP). Acts in the terminal step of the DOXP/MEP pathway for isoprenoid precursor biosynthesis. In Clostridium tetani (strain Massachusetts / E88), this protein is 4-hydroxy-3-methylbut-2-enyl diphosphate reductase.